Consider the following 141-residue polypeptide: Large ribosomal subunit protein uL11 (141 aa).

This sequence belongs to the universal ribosomal protein uL11 family. Part of the ribosomal stalk of the 50S ribosomal subunit. Interacts with L10 and the large rRNA to form the base of the stalk. L10 forms an elongated spine to which L12 dimers bind in a sequential fashion forming a multimeric L10(L12)X complex. One or more lysine residues are methylated.

In terms of biological role, forms part of the ribosomal stalk which helps the ribosome interact with GTP-bound translation factors. The protein is Large ribosomal subunit protein uL11 of Roseiflexus sp. (strain RS-1).